The sequence spans 2009 residues: MSLGLAGSLQAQLALEIVIQSLENCVLGPNQEKSLSVQNRVQDFQGASLLVCAREVIASNLSRPETPAPLQVPEMASLLSLQEENQLLQQELSRVEDLLAQSRAERDELAIKYNAVNERLEQAVRLETGELEAQEPRGLVRQSVELRRQLQEEQSSYRRKLQAYQEGQQRQAQLVQRLQAKILQYKKQCSELEKQLMDRSTELEQQRLRDTEHSQDLDSALLRLEEEQQRSASLAQVNAMLREQLDQANLANQALSEDIRKVTSDWTRSCKELEQREAVWRREEESFNTYFSSEHSRLLRLWRQVMGLRRQASEVKMGTERDLLQLGGELVRTSRAVQELGLGLSASLHRAESKAEAALEKQKLLQAQLEEQLQAKLLREKDLAQLQVQSDLDKADLSARVTELALSVEHLQNQNSEKDQVNRTLSDKLEALESLRLQEQTTLDTEDGEGLQQTLRDLAQAALSDTESGVQLSSSERTADTSDGSLRGFSGQRTPTPPRHSPGRGRSPRRGLSPACSDSSTLTLIHSALHKRQLQVQDMRGRYEASQELLGSVRKQLSDSEGERRGLEEQLQRLRDQTAASAQAQEDAQREAQRLRSANELLSREKGNLTHSLQVTQQQAKELRQELEKLQAAQEELKRQHNQLEDAQEDSVQEGARARRELERSHRQLEQLEVKRSGLTKELVEVREALSCAILQRDVLQTEKAEVAEALTKAEAGRAQLELSLTKLRAEEASLRDSLSKMSALNESLAQDKLELNRLIAQLEEEKVALLGRQQQAEHATTMAVEKQELLEQLRLEQEVERQGLQGSLCVAEQAREALEQQILVLRSERSHLQEQLAQLSRQLSGRDQELEQALRESQRQVEALERAAREKEAMAKERAGLAVKLAAAEREGRTLSEEAIRLRLEKEALESSLFDVQRQLAQLEARREQLEADSQALLLAKETLTGELAGLRQQVTSTEEKAALDKELMTQKLVQAEREAQASLREQRAAHEEDLQRLQHEKEAAWRELQAERAQLQGQLQQEREELLARMEAEKEELSKEIAALQQERDEGLLLAESEKQQALSLKESEKTALSEKLMGTRHSLAAISLEMERQKRDAQSRQEQDRNTLNALTSELRDLRAQLEEATAAHAQTVKELEERTGNLGRQREACMREAEELRTQLRVLEDTRDGLRRELLEAQRKGRDSQDSSEAHRQEASELRRSLSEGAKEREALRRSNEELRSAVKKAESERISLKLANEDKEQKLALLEEARVSVAKEAGELRASLQEVERSRLEARRELQELRRQMKTLDSDNGRLGRELADLQGRLALGERTEKESRREALGLRQRLLKGESSLEALKQELQGSQRKLQEQEAEFRARERGLLGSLEEARGAEKRLLDSARSLELRLEAVRAETSELGLRLSAAEGRAQGLEVELARVEAQRRVAEAQLGGLRSALRRGLGLGRVSSSPAREAPAGGSGDGLSSPSPLEYSPRSQPPSPGLIASPAPPDLDPEAVRDALRDFLQELRSAQRERDELKVQTSTLSQQLVEMEAERDHAASRAKQLQKAVAESEEAWRSADRRLSGAQAELALQEESVRRSKRECRATLDQMAVLERSLQATESELRASQEKVSKMKATEAKLESDKRRLKEVLDASESRSIKLELQRRALEGELQRSRLGLGDREAHAQALQDRVDSLQRQVADSEVKAGTLQLTVERLSGALAKVEESEGNLRSKVQSLTDALTQSSASLSSTQDKNLHLQKALSTCEHDRQVLQERLDAARQALSEARRQSSSLGEQVQTLRGELASLELQRGDAEGQLQQLQQALRQRQEGEAMALRSVQKLQEERRLLQERLGSLQRALAQLEAEKRDLERSALQFDKDRVALRKTLDKVEREKLRSHEDTLRLNAERGRLDRTLTGAELDLAEAQQQIQHLEAQVDVALEGNHNPVQPEAGEQQLELQQEVERLRSAQVQTERTLEARERAHRQRVSGLEEQVSTLKAQLHQELRRSSASVSLPPGTPEK.

Coiled-coil stretches lie at residues 74-265 (EMAS…VTSD) and 346-438 (ASLH…LRLQ). Disordered regions lie at residues 462–519 (ALSD…CSDS), 575–594 (RDQT…EAQR), 636–665 (ELKR…LERS), 1180–1225 (EAQR…ELRS), and 1448–1501 (GRVS…EAVR). Polar residues predominate over residues 463–484 (LSDTESGVQLSSSERTADTSDG). 2 coiled-coil regions span residues 550–1058 (LGSV…LLAE) and 1091–1439 (LEME…GLRS). The segment covering 577–586 (QTAASAQAQE) has biased composition (low complexity). Residues 656-665 (ARARRELERS) are compositionally biased toward basic and acidic residues. 3 positions are modified to phosphoserine: S1453, S1463, and S1469. Y1475 carries the phosphotyrosine modification. A phosphoserine mark is found at S1476, S1479, S1483, S1489, and S1568. A compositionally biased stretch (pro residues) spans 1479–1494 (SQPPSPGLIASPAPPD). 2 coiled-coil regions span residues 1498–1697 (EAVR…GTLQ) and 1744–1998 (HLQK…RSSA). The interval 1957 to 2009 (QVQTERTLEARERAHRQRVSGLEEQVSTLKAQLHQELRRSSASVSLPPGTPEK) is disordered.

The protein belongs to the rootletin family. Homomer. Interacts with KLC3, NEK2 and the N-terminus of CEP250. Interacts with CEP44. Phosphorylated by NEK2 which may regulate its association with centrosomes. In terms of tissue distribution, highest expression detected in photoreceptor cells of retina. Expressed at lower levels in brain, trachea and kidney. Detected in all major ciliated epithelia. During embryonic development, enriched along the apical domains of neuroepithelium in brain ventricular zone, in primordia of retinal pigment epithelia and in neural retina.

The protein localises to the cytoplasm. Its subcellular location is the cytoskeleton. It is found in the microtubule organizing center. It localises to the centrosome. The protein resides in the centriole. The protein localises to the cilium basal body. Its function is as follows. Major structural component of the ciliary rootlet, a cytoskeletal-like structure in ciliated cells which originates from the basal body at the proximal end of a cilium and extends proximally toward the cell nucleus. Furthermore, is required for the correct positioning of the cilium basal body relative to the cell nucleus, to allow for ciliogenesis. Contributes to centrosome cohesion before mitosis. The protein is Rootletin of Mus musculus (Mouse).